Here is a 105-residue protein sequence, read N- to C-terminus: UPF0060 membrane protein Reut_B3679 (105 aa).

The next 4 membrane-spanning stretches (helical) occupy residues 4-24 (IALYLLTAVAEILGCYLPYLW), 28-48 (GASAWVLLPGALSLALFAWLL), 60-80 (AAYGGVYIGVAVLWLWLVDGV), and 82-102 (PSAWDLAGVGVAFGGMAIIVF).

The protein belongs to the UPF0060 family.

The protein resides in the cell inner membrane. The polypeptide is UPF0060 membrane protein Reut_B3679 (Cupriavidus pinatubonensis (strain JMP 134 / LMG 1197) (Cupriavidus necator (strain JMP 134))).